Here is a 178-residue protein sequence, read N- to C-terminus: Fimbrial adapter PapK (178 aa).

A signal peptide spans 1–21 (MIKSTGALLLFAALSAGQAIA).

It localises to the secreted. Its subcellular location is the fimbrium. Its function is as follows. Adapter that links the pilus rod to the base of the tip fibrillum. Regulates the length of the tip fibrillum and joins it to the pilus rod. Pili are polar filaments radiating from the surface of the bacterium to a length of 0.5-1.5 micrometers and numbering 100-300 per cell, and enable bacteria to colonize the epithelium of specific host organs. The protein is Fimbrial adapter PapK (papK) of Escherichia coli O6:H1 (strain CFT073 / ATCC 700928 / UPEC).